A 386-amino-acid polypeptide reads, in one-letter code: 1-deoxy-D-xylulose 5-phosphate reductoisomerase (386 aa).

The NADPH site is built by Thr10, Gly11, Ser12, Ile13, Gly36, Asn38, and Asn122. Lys123 contributes to the 1-deoxy-D-xylulose 5-phosphate binding site. NADPH is bound at residue Glu124. Asp148 contacts Mn(2+). 1-deoxy-D-xylulose 5-phosphate-binding residues include Ser149, Glu150, Ser174, and His197. Glu150 contributes to the Mn(2+) binding site. Gly203 is a binding site for NADPH. Residues Ser210, Asn215, Lys216, and Glu219 each contribute to the 1-deoxy-D-xylulose 5-phosphate site. Glu219 lines the Mn(2+) pocket.

Belongs to the DXR family. Mg(2+) serves as cofactor. Requires Mn(2+) as cofactor.

It carries out the reaction 2-C-methyl-D-erythritol 4-phosphate + NADP(+) = 1-deoxy-D-xylulose 5-phosphate + NADPH + H(+). It participates in isoprenoid biosynthesis; isopentenyl diphosphate biosynthesis via DXP pathway; isopentenyl diphosphate from 1-deoxy-D-xylulose 5-phosphate: step 1/6. Functionally, catalyzes the NADPH-dependent rearrangement and reduction of 1-deoxy-D-xylulose-5-phosphate (DXP) to 2-C-methyl-D-erythritol 4-phosphate (MEP). This is 1-deoxy-D-xylulose 5-phosphate reductoisomerase from Geobacter sulfurreducens (strain ATCC 51573 / DSM 12127 / PCA).